A 208-amino-acid polypeptide reads, in one-letter code: Ribosomal RNA large subunit methyltransferase E (208 aa).

Gly63, Trp65, Asp83, Asp99, and Asp124 together coordinate S-adenosyl-L-methionine. Lys164 (proton acceptor) is an active-site residue.

It belongs to the class I-like SAM-binding methyltransferase superfamily. RNA methyltransferase RlmE family.

It is found in the cytoplasm. The catalysed reaction is uridine(2552) in 23S rRNA + S-adenosyl-L-methionine = 2'-O-methyluridine(2552) in 23S rRNA + S-adenosyl-L-homocysteine + H(+). In terms of biological role, specifically methylates the uridine in position 2552 of 23S rRNA at the 2'-O position of the ribose in the fully assembled 50S ribosomal subunit. In Alcanivorax borkumensis (strain ATCC 700651 / DSM 11573 / NCIMB 13689 / SK2), this protein is Ribosomal RNA large subunit methyltransferase E.